Reading from the N-terminus, the 614-residue chain is Putative amino acid transporter AAT1 (614 aa).

Transmembrane regions (helical) follow at residues 184–216 (VLFLCTAIGVGLLSIPYVFSELGIILSIILILL), 222–243 (YITTNILCMSSLEHNIFVYGNL), 255–275 (LIDFGLTFSFLSGYVLVLILV), 295–311 (RIFITIVICLLVLPLTF), 318–340 (INCFLVFSLFSITLTVLAVGYQS), 360–380 (HFFKCFNILLFSFSQQSNACF), 401–417 (ILIQVIFYTLFGLLGYL), 437–459 (SILLCKFFLCISFFFSIPLNFIA), 531–547 (CAAIFVTCLCAFVEFNV), 553–575 (FIGIFGGFTSSIISCILPNLIYY), and 587–613 (RYATLALLCFFSVIGLISSIVTAFIII).

This sequence belongs to the amino acid/polyamine transporter 2 family.

The protein resides in the vacuole membrane. Functionally, putative amino acid transporter. Involved in maintaining the osmotic homeostasis of the digestive vacuole. Important for the timely development and growth of the asexual-stage parasites and male gametocyte maturation. The polypeptide is Putative amino acid transporter AAT1 (Plasmodium berghei (strain Anka)).